The sequence spans 535 residues: GPI mannosyltransferase 4 (535 aa).

Residues 1-10 are Cytoplasmic-facing; that stretch reads MSLSLDFNWR. The helical transmembrane segment at 11–31 threads the bilayer; it reads YVYLIAIGLKFVLALSNSYIH. The Lumenal segment spans residues 32–91; the sequence is PDEHFQSFEVLTNKIFSFTTTTPWEFSSDTPARSFGPLYLFYAPLLYSIKLVGYELSPLQ. The helical transmembrane segment at 92-112 threads the bilayer; the sequence is IWYMARLQNVLIGWVITDMCI. Over 113 to 141 the chain is Cytoplasmic; sequence YRLLPTKPERIKGLFYTSTSYITLVYQSH. A helical transmembrane segment spans residues 142–162; the sequence is CFSNSIETWLVLICVLVINDL. Residues 163-181 lie on the Lumenal side of the membrane; sequence RFIQESNVPELQSQRQYQK. A helical transmembrane segment spans residues 182–202; that stretch reads LFWFGALVSIGIFNRITFPAF. Topologically, residues 203–220 are cytoplasmic; the sequence is LALPSLYLMKYFRHNKMS. Residues 221 to 241 form a helical membrane-spanning segment; it reads AIFSLLGFMLPTIAIILLDTF. Topologically, residues 242–284 are lumenal; sequence EFNGSIDDILKHPLDFNSYVITPLNNLIYNSKVENLSNHGLHP. Asn244 and Asn276 each carry an N-linked (GlcNAc...) asparagine glycan. The chain crosses the membrane as a helical span at residues 285 to 305; that stretch reads YYTHLLVNLPQILGPGLFFMV. At 306 to 311 the chain is on the cytoplasmic side; that stretch reads SNFKNQ. The chain crosses the membrane as a helical span at residues 312–332; it reads YWKTTPFLAVISGVSVLSLIP. At 333–337 the chain is on the lumenal side; the sequence is HQELR. Residues 338–358 form a helical membrane-spanning segment; that stretch reads FLIPIVPLVCCCFDLKNISSA. The Cytoplasmic segment spans residues 359–370; it reads SKGERITKAPPM. Residues 371-391 form a helical membrane-spanning segment; the sequence is VSVLMNLWYLFNILLAVLMGV. At 392–535 the chain is on the lumenal side; the sequence is YHQGGIVPAL…KPGLGIYELL (144 aa). Asn507 carries an N-linked (GlcNAc...) asparagine glycan.

It belongs to the glycosyltransferase 22 family. PIGZ subfamily.

It localises to the endoplasmic reticulum membrane. It functions in the pathway glycolipid biosynthesis; glycosylphosphatidylinositol-anchor biosynthesis. Alpha-1,2-mannosyltransferase involved in glycosylphosphatidylinositol-anchor biosynthesis. Transfers a fourth mannose to trimannosyl-GPIs during GPI precursor assembly. The presence of a fourth mannose in GPI is essential in fungi. In Debaryomyces hansenii (strain ATCC 36239 / CBS 767 / BCRC 21394 / JCM 1990 / NBRC 0083 / IGC 2968) (Yeast), this protein is GPI mannosyltransferase 4 (SMP3).